Consider the following 457-residue polypeptide: Putative methyltransferase MT1451 (457 aa).

Residues 276–282, E301, D325, and D341 each bind S-adenosyl-L-methionine; that span reads CAGPGGK. Residue C394 is the Nucleophile of the active site.

The protein belongs to the class I-like SAM-binding methyltransferase superfamily. RsmB/NOP family.

Its function is as follows. May act as RNA methyltransferase. This Mycobacterium tuberculosis (strain CDC 1551 / Oshkosh) protein is Putative methyltransferase MT1451.